Here is a 377-residue protein sequence, read N- to C-terminus: MKFEKLGQSGRARRGRLTLEHGVVETPIFMPVGTYGTVKGMLPRDIEDIQAQIILGNTFHLYLRPGLEVIKQHGGLHDFIKWNKPILTDSGGFQVFSLGAMRKIKEEGVTFRSPIDGSKVFLSPEISMEIQHVLNSDIVMIFDECTPYPATHEEAQKSLQLSLRWAKRCKAHHHDELKNKNALFGIIQGGMYEDLRDESLNGLLEIGFDGYAIGGLSVGEPKEEMIKVLDYLPNKMPHDKPRYLMGVGKPEDIVEAVRRGVDMFDCVMPTRNARNGHYFVTDGLVRIRNSKYRHDQGPLDPHCDCYTCKNFTRAYLFHLEKCGEMLASMLGTIHNLRYYQRLTEGMRDALDKGTFDEFVQDFYARRGLEVPPCPVDE.

Asp89 functions as the Proton acceptor in the catalytic mechanism. Residues Asp89–Phe93, Asp143, Gln188, and Gly215 contribute to the substrate site. The segment at Gly246–Asp252 is RNA binding. Residue Asp265 is the Nucleophile of the active site. Residues Thr270–Arg274 are RNA binding; important for wobble base 34 recognition. Positions 303, 305, 308, and 334 each coordinate Zn(2+).

Belongs to the queuine tRNA-ribosyltransferase family. Homodimer. Within each dimer, one monomer is responsible for RNA recognition and catalysis, while the other monomer binds to the replacement base PreQ1. Zn(2+) serves as cofactor.

It carries out the reaction 7-aminomethyl-7-carbaguanine + guanosine(34) in tRNA = 7-aminomethyl-7-carbaguanosine(34) in tRNA + guanine. It participates in tRNA modification; tRNA-queuosine biosynthesis. Catalyzes the base-exchange of a guanine (G) residue with the queuine precursor 7-aminomethyl-7-deazaguanine (PreQ1) at position 34 (anticodon wobble position) in tRNAs with GU(N) anticodons (tRNA-Asp, -Asn, -His and -Tyr). Catalysis occurs through a double-displacement mechanism. The nucleophile active site attacks the C1' of nucleotide 34 to detach the guanine base from the RNA, forming a covalent enzyme-RNA intermediate. The proton acceptor active site deprotonates the incoming PreQ1, allowing a nucleophilic attack on the C1' of the ribose to form the product. After dissociation, two additional enzymatic reactions on the tRNA convert PreQ1 to queuine (Q), resulting in the hypermodified nucleoside queuosine (7-(((4,5-cis-dihydroxy-2-cyclopenten-1-yl)amino)methyl)-7-deazaguanosine). In Acinetobacter baumannii (strain SDF), this protein is Queuine tRNA-ribosyltransferase.